The primary structure comprises 197 residues: Putative sulfur carrier protein aq_1421 (197 aa).

The Cysteine persulfide intermediate role is filled by Cys-17.

Belongs to the sulfur carrier protein TusA family.

This is Putative sulfur carrier protein aq_1421 from Aquifex aeolicus (strain VF5).